Here is a 419-residue protein sequence, read N- to C-terminus: Light-dependent chlorophyll f synthase (419 aa).

The next 5 membrane-spanning stretches (helical) occupy residues 73–90 (YIGW…TAAI), 162–177 (HFII…EWEL), 186–200 (WISL…ASVS), 241–262 (LHQM…HGSL), and 323–337 (CLAA…SAAI). H162 provides a ligand contact to a chlorophyll. An a chlorophyll-binding site is contributed by H242.

This sequence belongs to the reaction center PufL/M/PsbA/D family. Homodimer.

The protein localises to the cellular thylakoid membrane. Its function is as follows. Synthesizes chlorophyll f or chlorophyllide f (Chl f, 2-formyl chlorophyll a), probably by oxidation of chlorophyll a or chlorophyllide a and reduction of plastoquinone. The reaction is probably light-dependent. Chl f absorbs far red light (FRL, 707 nm in 100% methanol), and is synthesized when cells are grown in FRL, where it provides the advantage of extending the spectral range of harvested light in terrestrial cyanobacteria. Chl f synthesis is probably light-dependent. The sequence is that of Light-dependent chlorophyll f synthase from Synechococcus sp. (strain ATCC 29403 / PCC 7335).